The sequence spans 372 residues: Cytochrome b (372 aa).

4 helical membrane passes run 25-45, 69-90, 105-125, and 170-190; these read FGSMLLTCLMLQTITGFFLAL, WIMQNLHAISASLFFVCIYIHI, WLSGTALLITLMATAFFGYVL, and FFALHFILPFIIISLSSIHII. Heme b contacts are provided by His-75 and His-89. Heme b is bound by residues His-174 and His-188. His-193 provides a ligand contact to a ubiquinone. 4 helical membrane-spanning segments follow: residues 218 to 238, 280 to 300, 312 to 332, and 339 to 358; these read YKDMLMATTMITLLFLILSFA, LGGTLALIMSVMILTTMPFTH, LSQILFWTLIATFITITWTAS, and FITISQTTSIIYFFFFITTP.

This sequence belongs to the cytochrome b family. The cytochrome bc1 complex contains 3 respiratory subunits (MT-CYB, CYC1 and UQCRFS1), 2 core proteins (UQCRC1 and UQCRC2) and probably 6 low-molecular weight proteins. It depends on heme b as a cofactor.

Its subcellular location is the mitochondrion inner membrane. Functionally, component of the ubiquinol-cytochrome c reductase complex (complex III or cytochrome b-c1 complex) that is part of the mitochondrial respiratory chain. The b-c1 complex mediates electron transfer from ubiquinol to cytochrome c. Contributes to the generation of a proton gradient across the mitochondrial membrane that is then used for ATP synthesis. The protein is Cytochrome b (MT-CYB) of Naja nivea (Cape cobra).